The sequence spans 430 residues: Endochitinase 46 (430 aa).

The N-terminal stretch at 1 to 22 (MLSFLGKSVALLAALQATLSSA) is a signal peptide. The propeptide occupies 23–35 (SPLATEERSIEKR). The region spanning 39–408 (YANSVYFTNW…GTSHRALGGL (370 aa)) is the GH18 domain. Residues 103 to 104 (GT) and 130 to 133 (GGWT) each bind chitin. Glu172 (proton donor) is an active-site residue. Tyr173 contributes to the chitin binding site. Asn219 is a glycosylation site (N-linked (GlcNAc...) asparagine). Residues 238-241 (MAYD) and Trp385 each bind chitin.

The protein belongs to the glycosyl hydrolase 18 family. Chitinase class V subfamily.

The protein localises to the secreted. The enzyme catalyses Random endo-hydrolysis of N-acetyl-beta-D-glucosaminide (1-&gt;4)-beta-linkages in chitin and chitodextrins.. Its function is as follows. Secreted chitinase involved in the degradation of chitin, a component of the cell walls of fungi and exoskeletal elements of some animals (including worms and arthropods). Plays a morphogenetic role during apical growth, cell division and differentiation (cell wall morphogenesis). Also acts as an antifungal agent. Involved in the degradation and further assimilation of phytopathogenic fungi, namely mycoparasitism, the major mechanism accounting for the antagonistic activity against phytopathogenic fungi displayed by Trichoderma. In Trichoderma harzianum (Hypocrea lixii), this protein is Endochitinase 46 (chit46).